The primary structure comprises 186 residues: Probable nicotinate-nucleotide adenylyltransferase (186 aa).

It belongs to the NadD family.

The enzyme catalyses nicotinate beta-D-ribonucleotide + ATP + H(+) = deamido-NAD(+) + diphosphate. It participates in cofactor biosynthesis; NAD(+) biosynthesis; deamido-NAD(+) from nicotinate D-ribonucleotide: step 1/1. In terms of biological role, catalyzes the reversible adenylation of nicotinate mononucleotide (NaMN) to nicotinic acid adenine dinucleotide (NaAD). The polypeptide is Probable nicotinate-nucleotide adenylyltransferase (Thermus thermophilus (strain ATCC BAA-163 / DSM 7039 / HB27)).